The chain runs to 190 residues: MAGERERGGRDRKEREERDSEFVDKLVHINRVAKVVKGGKRFGFAALVVIGDQKGRVGFGHGKAREVPEAIRKATDSAKRNLTRVALREGRTLHHDIFGRHGAGRVYLRAAPAGTGIIAGGPMRAVFETLGIQDVVAKSIGSSNPYNMVRATFNALKHQDSPRSVAARRNIKVSTLQARRVGGDAEAAAD.

In terms of domain architecture, S5 DRBM spans 22–85; it reads FVDKLVHINR…DSAKRNLTRV (64 aa).

Belongs to the universal ribosomal protein uS5 family. As to quaternary structure, part of the 30S ribosomal subunit. Contacts proteins S4 and S8.

Functionally, with S4 and S12 plays an important role in translational accuracy. Its function is as follows. Located at the back of the 30S subunit body where it stabilizes the conformation of the head with respect to the body. The sequence is that of Small ribosomal subunit protein uS5 from Bradyrhizobium sp. (strain BTAi1 / ATCC BAA-1182).